A 79-amino-acid polypeptide reads, in one-letter code: Sec-independent protein translocase protein TatA (79 aa).

Residues 1–21 (MGGLQPWHWVIVIAVFVLLFG) traverse the membrane as a helical segment. The span at 43-52 (IKEMQSEGKS) shows a compositional bias: basic and acidic residues. The segment at 43-79 (IKEMQSEGKSDNPPATPITSERVDTNPTAEQPDKRSA) is disordered.

Belongs to the TatA/E family. In terms of assembly, the Tat system comprises two distinct complexes: a TatABC complex, containing multiple copies of TatA, TatB and TatC subunits, and a separate TatA complex, containing only TatA subunits. Substrates initially bind to the TatABC complex, which probably triggers association of the separate TatA complex to form the active translocon.

It is found in the cell membrane. Part of the twin-arginine translocation (Tat) system that transports large folded proteins containing a characteristic twin-arginine motif in their signal peptide across membranes. TatA could form the protein-conducting channel of the Tat system. The polypeptide is Sec-independent protein translocase protein TatA (Mycobacterium sp. (strain JLS)).